The chain runs to 72 residues: Translation initiation factor IF-1 2 (72 aa).

Residues 1–72 (MSKDDVIEVE…TRGRIVYRYK (72 aa)) form the S1-like domain.

The protein belongs to the IF-1 family. In terms of assembly, component of the 30S ribosomal translation pre-initiation complex which assembles on the 30S ribosome in the order IF-2 and IF-3, IF-1 and N-formylmethionyl-tRNA(fMet); mRNA recruitment can occur at any time during PIC assembly.

It localises to the cytoplasm. Functionally, one of the essential components for the initiation of protein synthesis. Stabilizes the binding of IF-2 and IF-3 on the 30S subunit to which N-formylmethionyl-tRNA(fMet) subsequently binds. Helps modulate mRNA selection, yielding the 30S pre-initiation complex (PIC). Upon addition of the 50S ribosomal subunit IF-1, IF-2 and IF-3 are released leaving the mature 70S translation initiation complex. This is Translation initiation factor IF-1 2 from Symbiobacterium thermophilum (strain DSM 24528 / JCM 14929 / IAM 14863 / T).